The sequence spans 617 residues: mRNA-decapping enzyme 1B (617 aa).

Ala-2 is subject to N-acetylalanine. Ser-147 carries the phosphoserine modification. At Tyr-191 the chain carries Phosphotyrosine. Disordered stretches follow at residues Asn-195–Glu-222 and Thr-243–Ile-266. Over residues Ser-205 to Leu-219 the composition is skewed to polar residues. Residues Gln-252–Gln-261 are compositionally biased toward low complexity. Phosphoserine is present on residues Ser-275 and Ser-336. A disordered region spans residues Thr-362–Gln-426. A compositionally biased stretch (low complexity) spans Pro-371–Ala-381. Phosphothreonine is present on Thr-392. 2 positions are modified to phosphoserine: Ser-448 and Ser-511.

It belongs to the DCP1 family. Interacts with DCP1A. As to quaternary structure, (Microbial infection) Interacts with rotavirus A non-structural protein 2; this interaction probably plays a role in the sequestration of DCP1B in viral factories. Interacts with rotavirus A non-structural protein 5; this interaction probably plays a role in its sequestration in viral factories.

The protein resides in the cytoplasm. Its subcellular location is the nucleus. The catalysed reaction is a 5'-end (N(7)-methyl 5'-triphosphoguanosine)-ribonucleoside in mRNA + H2O = N(7)-methyl-GDP + a 5'-end phospho-ribonucleoside in mRNA + 2 H(+). May play a role in the degradation of mRNAs, both in normal mRNA turnover and in nonsense-mediated mRNA decay. May remove the 7-methyl guanine cap structure from mRNA molecules, yielding a 5'-phosphorylated mRNA fragment and 7m-GDP. The polypeptide is mRNA-decapping enzyme 1B (DCP1B) (Homo sapiens (Human)).